Reading from the N-terminus, the 75-residue chain is U6-lycotoxin-Ls1d (75 aa).

The first 21 residues, 1–21, serve as a signal peptide directing secretion; that stretch reads MKLLFFTALVLVVISLIEVEA. Residues 22 to 25 constitute a propeptide that is removed on maturation; sequence ENER.

The protein belongs to the neurotoxin 19 (CSTX) family. 06 (U6-Lctx) subfamily. Contains 4 disulfide bonds. In terms of tissue distribution, expressed by the venom gland.

It is found in the secreted. In Lycosa singoriensis (Wolf spider), this protein is U6-lycotoxin-Ls1d.